Consider the following 200-residue polypeptide: Recombination protein RecR (200 aa).

The C4-type zinc-finger motif lies at 59 to 74 (CEKCNTFTEAQVCEVC). Residues 82–177 (ALLCVVETPA…AVTRLARGVP (96 aa)) form the Toprim domain.

This sequence belongs to the RecR family.

Its function is as follows. May play a role in DNA repair. It seems to be involved in an RecBC-independent recombinational process of DNA repair. It may act with RecF and RecO. The sequence is that of Recombination protein RecR from Burkholderia pseudomallei (strain 1106a).